Here is a 316-residue protein sequence, read N- to C-terminus: Secondary metabolism regulator LAE1 (316 aa).

It belongs to the methyltransferase superfamily. LaeA methyltransferase family. As to quaternary structure, component of the heterotrimeric velvet complex composed of LAE1, VEL1 and VEL2; VEL1 acting as a bridging protein between LAE1 and VEL2. Interacts with VEL1.

The protein resides in the nucleus. The catalysed reaction is L-methionyl-[protein] + S-adenosyl-L-methionine = S-methyl-L-methionyl-[protein] + S-adenosyl-L-homocysteine. Its function is as follows. Methyltransferase that performs automethylation. No other methyl-accepting substrate has been identified yet. Component of the velvet transcription factor complex that acts as a global regulator for secondary metabolite gene expression. Controls the expression of the gibberellins gene clusters, but does not affect bikaverin production. Controls the expression of the fusaric acid gene cluster. Acts as a virulence factors during infection, most likely through activation of gibberellins biosynthesis. The polypeptide is Secondary metabolism regulator LAE1 (Gibberella fujikuroi (strain CBS 195.34 / IMI 58289 / NRRL A-6831) (Bakanae and foot rot disease fungus)).